We begin with the raw amino-acid sequence, 122 residues long: Holo-[acyl-carrier-protein] synthase (122 aa).

Mg(2+) contacts are provided by Asp-8 and Glu-55.

Belongs to the P-Pant transferase superfamily. AcpS family. Requires Mg(2+) as cofactor.

The protein resides in the cytoplasm. The enzyme catalyses apo-[ACP] + CoA = holo-[ACP] + adenosine 3',5'-bisphosphate + H(+). Functionally, transfers the 4'-phosphopantetheine moiety from coenzyme A to a Ser of acyl-carrier-protein. The polypeptide is Holo-[acyl-carrier-protein] synthase (Fusobacterium nucleatum subsp. nucleatum (strain ATCC 25586 / DSM 15643 / BCRC 10681 / CIP 101130 / JCM 8532 / KCTC 2640 / LMG 13131 / VPI 4355)).